The chain runs to 248 residues: Octanoyltransferase (248 aa).

The BPL/LPL catalytic domain occupies 53–234 (ADTVDEIWIV…RLIANLDGES (182 aa)). Substrate contacts are provided by residues 93–100 (RGGQITYH), 165–167 (ALG), and 178–180 (GLS). The active-site Acyl-thioester intermediate is the Cys-196.

It belongs to the LipB family.

The protein localises to the cytoplasm. It catalyses the reaction octanoyl-[ACP] + L-lysyl-[protein] = N(6)-octanoyl-L-lysyl-[protein] + holo-[ACP] + H(+). The protein operates within protein modification; protein lipoylation via endogenous pathway; protein N(6)-(lipoyl)lysine from octanoyl-[acyl-carrier-protein]: step 1/2. In terms of biological role, catalyzes the transfer of endogenously produced octanoic acid from octanoyl-acyl-carrier-protein onto the lipoyl domains of lipoate-dependent enzymes. Lipoyl-ACP can also act as a substrate although octanoyl-ACP is likely to be the physiological substrate. This Burkholderia multivorans (strain ATCC 17616 / 249) protein is Octanoyltransferase.